The primary structure comprises 390 residues: Guanine nucleotide exchange factor for Rab-3A (390 aa).

The tract at residues 1–60 (MWSGQPHPDEGHPPPLEAVPVPWKSVGPCKSHRESLGGLPETPAGEEAQGEEGPAATQLD) is disordered. The span at 40-58 (PETPAGEEAQGEEGPAATQ) shows a compositional bias: low complexity. Residues 73–161 (EKGSEFLKEE…AEVTALKTLV (89 aa)) are a coiled coil. Positions 166–194 (PASPNRELHPQLLSPTKAGPRKGHLRHKS) are disordered. A phosphoserine mark is found at Ser-168 and Ser-179. Over residues 184-194 (GPRKGHLRHKS) the composition is skewed to basic residues.

Belongs to the SEC2 family. In terms of assembly, interacts with RAB3A and IHPK1 through the coiled-coil domain. This interaction is competitive. IHPK1 kinase activity is not required for this interaction.

In terms of biological role, guanine nucleotide exchange factor (GEF) which may activate RAB3A, a GTPase that regulates synaptic vesicle exocytosis. Promotes the exchange of GDP to GTP, converting inactive GDP-bound Rab proteins into their active GTP-bound form. May also activate RAB8A and RAB8B. The protein is Guanine nucleotide exchange factor for Rab-3A (RAB3IL1) of Bos taurus (Bovine).